The primary structure comprises 53 residues: UPF0391 membrane protein BPSS2216 (53 aa).

The next 2 membrane-spanning stretches (helical) occupy residues 5 to 25 (ALVF…GIAA) and 30 to 50 (IAKI…VLGV).

Belongs to the UPF0391 family.

It is found in the cell membrane. In Burkholderia pseudomallei (strain K96243), this protein is UPF0391 membrane protein BPSS2216.